The chain runs to 429 residues: MKASLEILKGLDRSLTVDLPIDIFNQKTDKILQKIASQVNFDGFRKGKVPVAVVRKRFGNNVNSDAINEIVNETLTDALTQVKATPVSQPVISKIDSEDEKNFSYTVDFEVFPEIKVADFSKLTIEQIKVEITKADEQRTLNGLKEQLTEYKAVKRKSEIGDRLSIDFKGLIDGKTFDGAEAKDFKIVLGKGSMIKGFEEGLIDVTPNSMLMLDLVFPKNYHMNKLSGKAVTFEININEVALPKEPKLNEVFAKKFGEKDMDALKVSIKMQMKVEIDGRIGYLNKNAIFDALSEANQFDVPQSSIDNEAQNLLKEMKERIQQQGGLPAQGEIPASAFNDEAQRRVKLGLLVNQISNDNKLSASLEQIDAKLQEISQAHGKDTQKIIDSYNQDPTKKLSIELLVIEKMVQDLILDKAKVTFKQKKFQEIT.

One can recognise a PPIase FKBP-type domain in the interval 161–246 (GDRLSIDFKG…INEVALPKEP (86 aa)).

This sequence belongs to the FKBP-type PPIase family. Tig subfamily.

The protein resides in the cytoplasm. The catalysed reaction is [protein]-peptidylproline (omega=180) = [protein]-peptidylproline (omega=0). Functionally, involved in protein export. Acts as a chaperone by maintaining the newly synthesized protein in an open conformation. Functions as a peptidyl-prolyl cis-trans isomerase. The sequence is that of Trigger factor from Ruthia magnifica subsp. Calyptogena magnifica.